The following is a 203-amino-acid chain: Orotate phosphoribosyltransferase (203 aa).

5-phospho-alpha-D-ribose 1-diphosphate-binding positions include R94, K95, K98, H100, and 119 to 127 (DDVATTGGS). Positions 123 and 151 each coordinate orotate.

It belongs to the purine/pyrimidine phosphoribosyltransferase family. PyrE subfamily. In terms of assembly, homodimer. The cofactor is Mg(2+).

The enzyme catalyses orotidine 5'-phosphate + diphosphate = orotate + 5-phospho-alpha-D-ribose 1-diphosphate. The protein operates within pyrimidine metabolism; UMP biosynthesis via de novo pathway; UMP from orotate: step 1/2. In terms of biological role, catalyzes the transfer of a ribosyl phosphate group from 5-phosphoribose 1-diphosphate to orotate, leading to the formation of orotidine monophosphate (OMP). This is Orotate phosphoribosyltransferase from Staphylothermus marinus (strain ATCC 43588 / DSM 3639 / JCM 9404 / F1).